The following is a 199-amino-acid chain: Glycerol-3-phosphate acyltransferase (199 aa).

Transmembrane regions (helical) follow at residues 3 to 23 (AAVW…GVLV), 50 to 70 (WGPA…AVLV), 78 to 98 (DWML…SVFL), 113 to 133 (LLFL…SVIL), and 154 to 174 (LALG…LLIF).

It belongs to the PlsY family. As to quaternary structure, probably interacts with PlsX.

The protein resides in the cell inner membrane. It catalyses the reaction an acyl phosphate + sn-glycerol 3-phosphate = a 1-acyl-sn-glycero-3-phosphate + phosphate. Its pathway is lipid metabolism; phospholipid metabolism. In terms of biological role, catalyzes the transfer of an acyl group from acyl-phosphate (acyl-PO(4)) to glycerol-3-phosphate (G3P) to form lysophosphatidic acid (LPA). This enzyme utilizes acyl-phosphate as fatty acyl donor, but not acyl-CoA or acyl-ACP. In Thermus thermophilus (strain ATCC 27634 / DSM 579 / HB8), this protein is Glycerol-3-phosphate acyltransferase.